The chain runs to 403 residues: S-adenosylmethionine synthase (403 aa).

His16 serves as a coordination point for ATP. Asp18 contacts Mg(2+). Residue Glu44 participates in K(+) binding. The L-methionine site is built by Glu57 and Gln110. Residues 110–120 (QSAHIAQGVDA) are flexible loop. ATP is bound by residues 175–177 (DSK), Asp253, 259–260 (RK), Ala276, and Lys280. Asp253 serves as a coordination point for L-methionine. Lys284 lines the L-methionine pocket.

The protein belongs to the AdoMet synthase family. As to quaternary structure, homotetramer; dimer of dimers. Requires Mg(2+) as cofactor. K(+) is required as a cofactor.

It is found in the cytoplasm. It carries out the reaction L-methionine + ATP + H2O = S-adenosyl-L-methionine + phosphate + diphosphate. The protein operates within amino-acid biosynthesis; S-adenosyl-L-methionine biosynthesis; S-adenosyl-L-methionine from L-methionine: step 1/1. Catalyzes the formation of S-adenosylmethionine (AdoMet) from methionine and ATP. The overall synthetic reaction is composed of two sequential steps, AdoMet formation and the subsequent tripolyphosphate hydrolysis which occurs prior to release of AdoMet from the enzyme. In Erythrobacter litoralis (strain HTCC2594), this protein is S-adenosylmethionine synthase.